The primary structure comprises 427 residues: Trigger factor (427 aa).

Residues 163 to 248 enclose the PPIase FKBP-type domain; sequence GDTVVIDFVG…IHEVKAKEVP (86 aa).

This sequence belongs to the FKBP-type PPIase family. Tig subfamily.

The protein localises to the cytoplasm. The catalysed reaction is [protein]-peptidylproline (omega=180) = [protein]-peptidylproline (omega=0). Functionally, involved in protein export. Acts as a chaperone by maintaining the newly synthesized protein in an open conformation. Functions as a peptidyl-prolyl cis-trans isomerase. This chain is Trigger factor, found in Streptococcus suis (strain 05ZYH33).